The sequence spans 81 residues: Large ribosomal subunit protein bL27 (81 aa).

The segment at 1–22 (MAHKKGQGSSRNGRDSNAQRRG) is disordered.

It belongs to the bacterial ribosomal protein bL27 family.

This Rhodopirellula baltica (strain DSM 10527 / NCIMB 13988 / SH1) protein is Large ribosomal subunit protein bL27.